We begin with the raw amino-acid sequence, 343 residues long: Methionine import ATP-binding protein MetN (343 aa).

Positions 2-241 (IKLSNITKVF…PKTPLAQKFI (240 aa)) constitute an ABC transporter domain. 40 to 46 (SGAGKST) lines the ATP pocket. Positions 265-343 (CVPMLRLEFT…HVKVEVLGYV (79 aa)) are C2 domain. L-methionine contacts are provided by residues 278–283 (VDAPLL) and 295–296 (NI).

Belongs to the ABC transporter superfamily. Methionine importer (TC 3.A.1.24) family. The complex is composed of two ATP-binding proteins (MetN), two transmembrane proteins (MetI) and a solute-binding protein (MetQ).

The protein localises to the cell inner membrane. It carries out the reaction L-methionine(out) + ATP + H2O = L-methionine(in) + ADP + phosphate + H(+). The catalysed reaction is D-methionine(out) + ATP + H2O = D-methionine(in) + ADP + phosphate + H(+). ATPase activity is inhibited by intracellular L-methionine. Binding of methionine to the dimerized C-terminal regulatory domain stabilizes an inward-facing, ATPase-inactive conformation of the transporter, and as a consequence, the rate of ATP hydrolysis decreases. ADP is a competitive inhibitor. Its function is as follows. Part of the ABC transporter complex MetNIQ involved in methionine import. Responsible for energy coupling to the transport system. It has also been shown to be involved in formyl-L-methionine transport. This Escherichia coli (strain K12) protein is Methionine import ATP-binding protein MetN.